The following is a 123-amino-acid chain: Small ribosomal subunit protein uS12 (123 aa).

Asp-89 carries the post-translational modification 3-methylthioaspartic acid.

This sequence belongs to the universal ribosomal protein uS12 family. In terms of assembly, part of the 30S ribosomal subunit. Contacts proteins S8 and S17. May interact with IF1 in the 30S initiation complex.

Functionally, with S4 and S5 plays an important role in translational accuracy. Its function is as follows. Interacts with and stabilizes bases of the 16S rRNA that are involved in tRNA selection in the A site and with the mRNA backbone. Located at the interface of the 30S and 50S subunits, it traverses the body of the 30S subunit contacting proteins on the other side and probably holding the rRNA structure together. The combined cluster of proteins S8, S12 and S17 appears to hold together the shoulder and platform of the 30S subunit. The sequence is that of Small ribosomal subunit protein uS12 from Caulobacter vibrioides (strain ATCC 19089 / CIP 103742 / CB 15) (Caulobacter crescentus).